The following is a 430-amino-acid chain: Bone morphogenetic protein 7 (430 aa).

An N-terminal signal peptide occupies residues Met-1–Ala-29. The propeptide occupies Asp-30–Arg-291. N-linked (GlcNAc...) asparagine glycans are attached at residues Asn-186, Asn-301, Asn-320, and Asn-371. The segment at Ile-290–Glu-310 is disordered. 3 disulfide bridges follow: Cys-329–Cys-395, Cys-358–Cys-427, and Cys-362–Cys-429.

Belongs to the TGF-beta family. Homodimer; disulfide-linked. Interacts with SOSTDC1. Interacts with TWSG1. Interacts with FBN1 (via N-terminal domain) and FBN2. Interacts with type I receptor ACVR1. Interacts with type II receptor ACVR2A. Interacts with NOG; this interaction inhibits canonical BMP signaling. Interacts with SCUBE3. Interacts with ERFE; the interaction inhibits BMP-induced transcription of HAMP. Interacts with TGFBR3.

Its subcellular location is the secreted. Its function is as follows. Growth factor of the TGF-beta superfamily that plays important role in various biological processes, including embryogenesis, hematopoiesis, neurogenesis and skeletal morphogenesis. Initiates the canonical BMP signaling cascade by associating with type I receptor ACVR1 and type II receptor ACVR2A. Once all three components are bound together in a complex at the cell surface, ACVR2A phosphorylates and activates ACVR1. In turn, ACVR1 propagates signal by phosphorylating SMAD1/5/8 that travel to the nucleus and act as activators and repressors of transcription of target genes. For specific functions such as growth cone collapse in developing spinal neurons and chemotaxis of monocytes, also uses BMPR2 as type II receptor. Can also signal through non-canonical pathways such as P38 MAP kinase signaling cascade that promotes brown adipocyte differentiation through activation of target genes, including members of the SOX family of transcription factors. Promotes the expression of HAMP, this is repressed by its interaction with ERFE. This Mus musculus (Mouse) protein is Bone morphogenetic protein 7 (Bmp7).